Consider the following 1216-residue polypeptide: SPOC domain-containing protein 1 (1216 aa).

5 disordered regions span residues 1-74 (MSQA…RAAG), 166-216 (EARD…GAHS), 236-325 (NLLS…PPQS), 348-462 (RTGS…PRLE), and 511-601 (SSPS…QQEK). Residues 36 to 50 (PGLSPDGPGASSGPG) are compositionally biased toward low complexity. Positions 177-190 (CDRRSPTLSKEEPP) are enriched in basic and acidic residues. The span at 204 to 213 (RVRKKWRRQG) shows a compositional bias: basic residues. Over residues 266-278 (SGPGEPGGSGAGC) the composition is skewed to gly residues. Positions 314–325 (SLSSAAQAPPQS) are enriched in low complexity. The segment covering 436 to 452 (RGTDRSSDNSHQDRPEE) has biased composition (basic and acidic residues). The span at 581 to 592 (EAEEDSLPEQPE) shows a compositional bias: acidic residues. Positions 608-728 (VRGTVVRSMQ…IIEQQQKEPC (121 aa)) constitute a TFIIS central domain. Positions 823 to 850 (QTPMPAPEMPKTRELSPTEPQDRVPPSG) are disordered. Residues 832–844 (PKTRELSPTEPQD) show a composition bias toward basic and acidic residues. One can recognise an SPOC domain in the interval 867 to 970 (WEGVLDMFSI…VEHMGMVLLP (104 aa)). Residues 1046–1055 (RYYQPDDRRP) show a composition bias toward basic and acidic residues. 2 disordered regions span residues 1046–1140 (RYYQ…QHFH) and 1176–1216 (PRPL…PRKA).

As to quaternary structure, interacts with DNMT3A, DNMT3C and DNMT3L. Interacts with C19orf84. Interacts with SPIN1; promoting recruitment to transposons marked with histone H3 trimethylated at both 'Lys-4' and 'Lys-9' (H3K4me3K9me3).

Its subcellular location is the nucleus. It is found in the chromosome. In terms of biological role, protein adapter that acts as an essential executor of PIWIL4-piRNA pathway directed transposon DNA methylation and silencing in the male embryonic germ cells. Recruited to young transposons, which are specifically marked with histone H3 trimethylated at both 'Lys-4' and 'Lys-9' (H3K4me3K9me3), via its association with SPIN1 chromatin reader, and associates with the de novo DNA methylation machinery and repressive chromatin remodeling complexes. Following this, PIWIL4 engages with nascent transposable element transcript to direct piRNA-directed DNA methylation. Not required for piRNA biosynthesis. The sequence is that of SPOC domain-containing protein 1 from Homo sapiens (Human).